A 405-amino-acid chain; its full sequence is Bifunctional enzyme IspD/IspF (405 aa).

The 2-C-methyl-D-erythritol 4-phosphate cytidylyltransferase stretch occupies residues 1–240 (MTLADKPVLS…KLLLDEPKYR (240 aa)). Residues 240–405 (RVGTGYDIHR…LLYKIAPLHN (166 aa)) form a 2-C-methyl-D-erythritol 2,4-cyclodiphosphate synthase region. Positions 246 and 248 each coordinate a divalent metal cation. Residues 246-248 (DIH) and 277-278 (HS) contribute to the 4-CDP-2-C-methyl-D-erythritol 2-phosphate site. Residue His-285 coordinates a divalent metal cation. 4-CDP-2-C-methyl-D-erythritol 2-phosphate contacts are provided by residues 299 to 301 (DIG), 375 to 378 (TTTE), and Arg-385.

The protein in the N-terminal section; belongs to the IspD/TarI cytidylyltransferase family. IspD subfamily. It in the C-terminal section; belongs to the IspF family. The cofactor is a divalent metal cation.

It carries out the reaction 2-C-methyl-D-erythritol 4-phosphate + CTP + H(+) = 4-CDP-2-C-methyl-D-erythritol + diphosphate. It catalyses the reaction 4-CDP-2-C-methyl-D-erythritol 2-phosphate = 2-C-methyl-D-erythritol 2,4-cyclic diphosphate + CMP. It participates in isoprenoid biosynthesis; isopentenyl diphosphate biosynthesis via DXP pathway; isopentenyl diphosphate from 1-deoxy-D-xylulose 5-phosphate: step 2/6. Its pathway is isoprenoid biosynthesis; isopentenyl diphosphate biosynthesis via DXP pathway; isopentenyl diphosphate from 1-deoxy-D-xylulose 5-phosphate: step 4/6. Its function is as follows. Bifunctional enzyme that catalyzes the formation of 4-diphosphocytidyl-2-C-methyl-D-erythritol from CTP and 2-C-methyl-D-erythritol 4-phosphate (MEP) (IspD), and catalyzes the conversion of 4-diphosphocytidyl-2-C-methyl-D-erythritol 2-phosphate (CDP-ME2P) to 2-C-methyl-D-erythritol 2,4-cyclodiphosphate (ME-CPP) with a corresponding release of cytidine 5-monophosphate (CMP) (IspF). The polypeptide is Bifunctional enzyme IspD/IspF (Wolbachia sp. subsp. Brugia malayi (strain TRS)).